A 210-amino-acid polypeptide reads, in one-letter code: Eukaryotic translation initiation factor 2 subunit gamma (210 aa).

The tr-type G domain occupies 1 to 196 (IGHVAHGKST…HLVETITPPR (196 aa)). Residues 2-9 (GHVAHGKS) are G1. 5–10 (AHGKST) contributes to the GTP binding site. The tract at residues 30–34 (NITIK) is G2. The G3 stretch occupies residues 85–88 (DCPG). GTP is bound by residues 141 to 144 (NKID) and 174 to 176 (SAI). Residues 141 to 144 (NKID) are G4. The interval 174-176 (SAI) is G5.

Belongs to the TRAFAC class translation factor GTPase superfamily. Classic translation factor GTPase family. EIF2G subfamily. As to quaternary structure, eukaryotic translation initiation factor 2 eIF2 is a heterotrimeric complex composed of an alpha, a beta and a gamma subunit. The factors eIF-1, eIF-2, eIF-3, TIF5/eIF-5 and methionyl-tRNAi form a multifactor complex (MFC) that may bind to the 40S ribosome.

The protein localises to the cytoplasm. Its subcellular location is the cytosol. It catalyses the reaction GTP + H2O = GDP + phosphate + H(+). Functionally, as a subunit of eukaryotic initiation factor 2 eIF2, involved in the early steps of protein synthesis. In the presence of GTP, eIF-2 forms a ternary complex with initiator tRNA Met-tRNAi and then recruits the 40S ribosomal complex and initiation factors eIF-1, eIF-1A and eIF-3 to form the 43S pre-initiation complex (43S PIC), a step that determines the rate of protein translation. The 43S PIC binds to mRNA and scans downstream to the initiation codon, where it forms a 48S initiation complex by codon-anticodon base pairing. This leads to the displacement of eIF-1 to allow GTPase-activating protein (GAP) eIF-5-mediated hydrolysis of eIF2-bound GTP. Hydrolysis of GTP and release of Pi, which makes GTP hydrolysis irreversible, causes the release of the eIF-2-GDP binary complex from the 40S subunit, an event that is essential for the subsequent joining of the 60S ribosomal subunit to form an elongation-competent 80S ribosome. In order for eIF-2 to recycle and catalyze another round of initiation, the GDP bound to eIF-2 must be exchanged with GTP by way of a reaction catalyzed by GDP-GTP exchange factor (GEF) eIF-2B. The protein is Eukaryotic translation initiation factor 2 subunit gamma of Spironucleus vortens.